A 156-amino-acid chain; its full sequence is Small ribosomal subunit protein uS7 (156 aa).

This sequence belongs to the universal ribosomal protein uS7 family. As to quaternary structure, part of the 30S ribosomal subunit. Contacts proteins S9 and S11.

In terms of biological role, one of the primary rRNA binding proteins, it binds directly to 16S rRNA where it nucleates assembly of the head domain of the 30S subunit. Is located at the subunit interface close to the decoding center, probably blocks exit of the E-site tRNA. The polypeptide is Small ribosomal subunit protein uS7 (Bacillus cereus (strain ZK / E33L)).